The following is a 1502-amino-acid chain: Nucleoporin NUP170 (1502 aa).

Residues 1 to 31 (MFQSFFHNNGPAAAGETFSDSRSYPLTNHQE) are disordered. The segment covering 18 to 30 (FSDSRSYPLTNHQ) has biased composition (polar residues). The segment at 233–261 (LISTTMELFMFAISLDKATNELSVFNTHL) is leucine-zipper. Ser-1247 is modified (phosphoserine).

This sequence belongs to the non-repetitive/WGA-negative nucleoporin family. Component of the nuclear pore complex (NPC). NPC constitutes the exclusive means of nucleocytoplasmic transport. NPCs allow the passive diffusion of ions and small molecules and the active, nuclear transport receptor-mediated bidirectional transport of macromolecules such as proteins, RNAs, ribonucleoparticles (RNPs), and ribosomal subunits across the nuclear envelope. Due to its 8-fold rotational symmetry, all subunits are present with 8 copies or multiples thereof. During mitosis NUP53 changes its binding partner within the NPC from NUP170 to NIC96, exposing a high affinity binding site for the karyopherin PSE1, and retaining it in the NPC.

It localises to the nucleus. The protein localises to the nuclear pore complex. The protein resides in the nucleus membrane. Functionally, functions as a component of the nuclear pore complex (NPC). NPC components, collectively referred to as nucleoporins (NUPs), can play the role of both NPC structural components and of docking or interaction partners for transiently associated nuclear transport factors. NUP170 probably plays an important role in NPC assembly and organization. In addition it is required for chromosome transmission fidelity. The chain is Nucleoporin NUP170 (NUP170) from Saccharomyces cerevisiae (strain ATCC 204508 / S288c) (Baker's yeast).